A 398-amino-acid polypeptide reads, in one-letter code: MDSSTGPGNTSDCSDPLAQASCSPAPGSWLNLSHVDGNQSDPCGLNRTGLGGNDSLCPQTGSPSMVTAITIMALYSIVCVVGLFGNFLVMYVIVRYTKMKTATNIYIFNLALADALATSTLPFQSVNYLMGTWPFGTILCKIVISIDYYNMFTSIFTLCTMSVDRYIAVCHPVKALDFRTPRNAKIVNVCNWILSSAIGLPVMFMATTKYRQGSIDCTLTFSHPTWYWENLLKICVFIFAFIMPVLIITVCYGLMILRLKSVRMLSGSKEKDRNLRRITRMVLVVVAVFIVCWTPIHIYVIIKALITIPETTFQTVSWHFCIALGYTNSCLNPVLYAFLDENFKRCFREFCIPTSSTIEQQNSTRVRQNTREHPSTANTVDRTNHQLENLEAETAPLP.

The Extracellular portion of the chain corresponds to 1 to 66 (MDSSTGPGNT…CPQTGSPSMV (66 aa)). Asn9, Asn31, Asn38, Asn46, and Asn53 each carry an N-linked (GlcNAc...) asparagine glycan. The helical transmembrane segment at 67–91 (TAITIMALYSIVCVVGLFGNFLVMY) threads the bilayer. The Cytoplasmic segment spans residues 92-104 (VIVRYTKMKTATN). Residues 105-129 (IYIFNLALADALATSTLPFQSVNYL) form a helical membrane-spanning segment. At 130-140 (MGTWPFGTILC) the chain is on the extracellular side. The cysteines at positions 140 and 217 are disulfide-linked. Residues 141-163 (KIVISIDYYNMFTSIFTLCTMSV) traverse the membrane as a helical segment. At 164–183 (DRYIAVCHPVKALDFRTPRN) the chain is on the cytoplasmic side. Residue Tyr166 is modified to Phosphotyrosine. Residues 184–205 (AKIVNVCNWILSSAIGLPVMFM) form a helical membrane-spanning segment. The Extracellular portion of the chain corresponds to 206–228 (ATTKYRQGSIDCTLTFSHPTWYW). The chain crosses the membrane as a helical span at residues 229–253 (ENLLKICVFIFAFIMPVLIITVCYG). The Cytoplasmic portion of the chain corresponds to 254-277 (LMILRLKSVRMLSGSKEKDRNLRR). A helical membrane pass occupies residues 278–304 (ITRMVLVVVAVFIVCWTPIHIYVIIKA). The Extracellular portion of the chain corresponds to 305 to 312 (LITIPETT). A helical transmembrane segment spans residues 313 to 336 (FQTVSWHFCIALGYTNSCLNPVLY). Residues 332–336 (NPVLY) carry the NPxxY; plays a role in stabilizing the activated conformation of the receptor motif. Over 337 to 398 (AFLDENFKRC…NLEAETAPLP (62 aa)) the chain is Cytoplasmic. A lipid anchor (S-palmitoyl cysteine) is attached at Cys351. The segment at 361 to 385 (QNSTRVRQNTREHPSTANTVDRTNH) is disordered. A Phosphoserine modification is found at Ser363. At Thr370 the chain carries Phosphothreonine. The residue at position 375 (Ser375) is a Phosphoserine. Thr394 carries the post-translational modification Phosphothreonine.

It belongs to the G-protein coupled receptor 1 family. As to quaternary structure, forms homooligomers and heterooligomers with other GPCRs, such as OPRD1, OPRK1, OPRL1, NPFFR2, ADRA2A, SSTR2, CNR1 and CCR5 (probably in dimeric forms). Interacts with heterotrimeric G proteins; interaction with a heterotrimeric complex containing GNAI1, GNB1 and GNG2 stabilizes the active conformation of the receptor and increases its affinity for endomorphin-2, the synthetic opioid peptide DAMGO and for morphinan agonists. Interacts with PPL; the interaction disrupts agonist-mediated G-protein activation. Interacts (via C-terminus) with DNAJB4 (via C-terminus). Interacts with calmodulin; the interaction inhibits the constitutive activity of OPRM1; it abolishes basal and attenuates agonist-stimulated G-protein coupling. Interacts with FLNA, PLD2, RANBP9 and WLS and GPM6A. Interacts with RTP4. Interacts with SYP and GNAS. Interacts with RGS9, RGS17, RGS20, RGS4, PPP1R9B and HINT1. In terms of processing, phosphorylated. Differentially phosphorylated in basal and agonist-induced conditions. Agonist-mediated phosphorylation modulates receptor internalization. Phosphorylated by GRK2 in a agonist-dependent manner. Phosphorylation at Tyr-166 requires receptor activation, is dependent on non-receptor protein tyrosine kinase Src and results in a decrease in agonist efficacy by reducing G-protein coupling efficiency. Phosphorylated on tyrosine residues; the phosphorylation is involved in agonist-induced G-protein-independent receptor down-regulation. Phosphorylation at Ser-375 is involved in G-protein-dependent but not beta-arrestin-dependent activation of the ERK pathway. Post-translationally, ubiquitinated. A basal ubiquitination seems not to be related to degradation. Ubiquitination is increased upon formation of OPRM1:OPRD1 oligomers leading to proteasomal degradation; the ubiquitination is diminished by RTP4. In terms of tissue distribution, brain. Is expressed in the cerebral cortex, caudate putamen, nucleus accumbens, septal nuclei, thalamus, hippocampus, and habenula. Not detected in cerebellum.

The protein localises to the cell membrane. Its subcellular location is the cell projection. The protein resides in the axon. It localises to the perikaryon. It is found in the dendrite. The protein localises to the endosome. Its function is as follows. Receptor for endogenous opioids such as beta-endorphin and endomorphin. Receptor for natural and synthetic opioids including morphine, heroin, DAMGO, fentanyl, etorphine, buprenorphin and methadone. Also activated by enkephalin peptides, such as Met-enkephalin or Met-enkephalin-Arg-Phe, with higher affinity for Met-enkephalin-Arg-Phe. Agonist binding to the receptor induces coupling to an inactive GDP-bound heterotrimeric G-protein complex and subsequent exchange of GDP for GTP in the G-protein alpha subunit leading to dissociation of the G-protein complex with the free GTP-bound G-protein alpha and the G-protein beta-gamma dimer activating downstream cellular effectors. The agonist- and cell type-specific activity is predominantly coupled to pertussis toxin-sensitive G(i) and G(o) G alpha proteins, GNAI1, GNAI2, GNAI3 and GNAO1 isoforms Alpha-1 and Alpha-2, and to a lesser extent to pertussis toxin-insensitive G alpha proteins GNAZ and GNA15. They mediate an array of downstream cellular responses, including inhibition of adenylate cyclase activity and both N-type and L-type calcium channels, activation of inward rectifying potassium channels, mitogen-activated protein kinase (MAPK), phospholipase C (PLC), phosphoinositide/protein kinase (PKC), phosphoinositide 3-kinase (PI3K) and regulation of NF-kappa-B. Also couples to adenylate cyclase stimulatory G alpha proteins. The selective temporal coupling to G-proteins and subsequent signaling can be regulated by RGSZ proteins, such as RGS9, RGS17 and RGS4. Phosphorylation by members of the GPRK subfamily of Ser/Thr protein kinases and association with beta-arrestins is involved in short-term receptor desensitization. Beta-arrestins associate with the GPRK-phosphorylated receptor and uncouple it from the G-protein thus terminating signal transduction. The phosphorylated receptor is internalized through endocytosis via clathrin-coated pits which involves beta-arrestins. The activation of the ERK pathway occurs either in a G-protein-dependent or a beta-arrestin-dependent manner and is regulated by agonist-specific receptor phosphorylation. Acts as a class A G-protein coupled receptor (GPCR) which dissociates from beta-arrestin at or near the plasma membrane and undergoes rapid recycling. Receptor down-regulation pathways are varying with the agonist and occur dependent or independent of G-protein coupling. Endogenous ligands induce rapid desensitization, endocytosis and recycling. Heterooligomerization with other GPCRs can modulate agonist binding, signaling and trafficking properties. This Rattus norvegicus (Rat) protein is Mu-type opioid receptor (Oprm1).